We begin with the raw amino-acid sequence, 232 residues long: RNA chaperone ProQ (232 aa).

A disordered region spans residues 105–182 (EAKARVQAQR…REEQHTPVSD (78 aa)). 2 stretches are compositionally biased toward basic and acidic residues: residues 117–138 (QQAK…PPRE) and 147–177 (RRKE…EEQH).

The protein belongs to the ProQ family.

The protein resides in the cytoplasm. Functionally, RNA chaperone with significant RNA binding, RNA strand exchange and RNA duplexing activities. May regulate ProP activity through an RNA-based, post-transcriptional mechanism. This is RNA chaperone ProQ from Escherichia coli O139:H28 (strain E24377A / ETEC).